The primary structure comprises 1789 residues: Protein TIC 214 (1789 aa).

The next 6 membrane-spanning stretches (helical) occupy residues 19-39 (IINSVVVVGLYYGFLTTFSIG), 68-88 (FIAGQLMMFISIYYAPLHLAL), 91-111 (PHTITVLALPYLLFHFFWNNH), 133-153 (VFLNNLIFQLFNHFILPSSML), 176-196 (VGWLIGHILFMKWVGLVLVWI), and 227-247 (IFSILLFITCVYYLGRIPSPI).

Belongs to the TIC214 family. In terms of assembly, part of the Tic complex.

It localises to the plastid. The protein localises to the chloroplast inner membrane. Involved in protein precursor import into chloroplasts. May be part of an intermediate translocation complex acting as a protein-conducting channel at the inner envelope. This chain is Protein TIC 214, found in Capsella bursa-pastoris (Shepherd's purse).